A 71-amino-acid chain; its full sequence is Small ribosomal subunit protein bS21 (71 aa).

A disordered region spans residues 43–71 (TERKRAKASAVKRHAKKLARENARRTRLY). The segment covering 46-59 (KRAKASAVKRHAKK) has biased composition (basic residues). Over residues 60-71 (LARENARRTRLY) the composition is skewed to basic and acidic residues.

The protein belongs to the bacterial ribosomal protein bS21 family.

This chain is Small ribosomal subunit protein bS21, found in Pectobacterium atrosepticum (strain SCRI 1043 / ATCC BAA-672) (Erwinia carotovora subsp. atroseptica).